A 455-amino-acid polypeptide reads, in one-letter code: Glutamyl-tRNA reductase (455 aa).

Substrate is bound by residues 49 to 52, Ser109, 114 to 116, and Gln120; these read TCNR and ETQ. The Nucleophile role is filled by Cys50. 189-194 provides a ligand contact to NADP(+); sequence GAGKMG.

Belongs to the glutamyl-tRNA reductase family. In terms of assembly, homodimer.

It catalyses the reaction (S)-4-amino-5-oxopentanoate + tRNA(Glu) + NADP(+) = L-glutamyl-tRNA(Glu) + NADPH + H(+). The protein operates within porphyrin-containing compound metabolism; protoporphyrin-IX biosynthesis; 5-aminolevulinate from L-glutamyl-tRNA(Glu): step 1/2. Functionally, catalyzes the NADPH-dependent reduction of glutamyl-tRNA(Glu) to glutamate 1-semialdehyde (GSA). The protein is Glutamyl-tRNA reductase of Bacillus pumilus (strain SAFR-032).